The chain runs to 249 residues: Triosephosphate isomerase (249 aa).

Substrate is bound at residue 9 to 11; the sequence is NWK. His95 serves as the catalytic Electrophile. Glu167 serves as the catalytic Proton acceptor. Residues Gly173, Ser213, and 234-235 contribute to the substrate site; that span reads GG.

Belongs to the triosephosphate isomerase family. Homodimer.

It is found in the cytoplasm. It carries out the reaction D-glyceraldehyde 3-phosphate = dihydroxyacetone phosphate. It functions in the pathway carbohydrate biosynthesis; gluconeogenesis. Its pathway is carbohydrate degradation; glycolysis; D-glyceraldehyde 3-phosphate from glycerone phosphate: step 1/1. Its function is as follows. Involved in the gluconeogenesis. Catalyzes stereospecifically the conversion of dihydroxyacetone phosphate (DHAP) to D-glyceraldehyde-3-phosphate (G3P). This is Triosephosphate isomerase from Dictyoglomus turgidum (strain DSM 6724 / Z-1310).